Reading from the N-terminus, the 95-residue chain is Protein TusB (95 aa).

This sequence belongs to the DsrH/TusB family. Heterohexamer, formed by a dimer of trimers. The hexameric TusBCD complex contains 2 copies each of TusB, TusC and TusD. The TusBCD complex interacts with TusE.

Its subcellular location is the cytoplasm. Its function is as follows. Part of a sulfur-relay system required for 2-thiolation of 5-methylaminomethyl-2-thiouridine (mnm(5)s(2)U) at tRNA wobble positions. In Buchnera aphidicola subsp. Baizongia pistaciae (strain Bp), this protein is Protein TusB.